The chain runs to 792 residues: Starch synthase 2, chloroplastic/amyloplastic (792 aa).

The N-terminal 55 residues, 1 to 55 (MASVAESSFPLLCQIKTQRRINSSTLRHSRVSYHDLPSGSLSFRSRSFVLGHRCK), are a transit peptide targeting the chloroplast. The disordered stretch occupies residues 105–295 (IKESTPDLDD…GKDEEKPPPL (191 aa)). Positions 145-156 (GSVSPSTYGKSS) are enriched in polar residues. Residues 179–192 (SSASVISSSPVTSP) are compositionally biased toward low complexity. The span at 221 to 233 (SVMTSPEKTSDPV) shows a compositional bias: polar residues. Basic and acidic residues predominate over residues 266-275 (KTEKYVEKTP). Position 315 (lysine 315) interacts with ADP-alpha-D-glucose.

The protein belongs to the glycosyltransferase 1 family. Bacterial/plant glycogen synthase subfamily. As to expression, expressed in roots, leaves and flowers.

It localises to the plastid. It is found in the chloroplast. Its subcellular location is the amyloplast. It catalyses the reaction [(1-&gt;4)-alpha-D-glucosyl](n) + ADP-alpha-D-glucose = [(1-&gt;4)-alpha-D-glucosyl](n+1) + ADP + H(+). It functions in the pathway glycan biosynthesis; starch biosynthesis. Functionally, involved in the synthesis of glycan chains within amylopectin in leaves. Is required to produce chains with a degree of polymerization of 12 to 25 (DP12-DP25). In Arabidopsis thaliana (Mouse-ear cress), this protein is Starch synthase 2, chloroplastic/amyloplastic (SS2).